Reading from the N-terminus, the 462-residue chain is Putative F-box protein At1g12855 (462 aa).

Over residues 1–22 the composition is skewed to basic and acidic residues; sequence MESREDSFISKEKKSTMKKEKQ. Residues 1–59 form a disordered region; sequence MESREDSFISKEKKSTMKKEKQAIASQRNRRRVIKNRGNGKRLIASLSQRKRRRIPRGR. Residues 28–40 show a composition bias toward basic residues; that stretch reads RNRRRVIKNRGNG. In terms of domain architecture, F-box spans 65–110; it reads VFAPSSLPNDVVEEIFLRLPVKAIIQLKSLSKQWRSTIESRSFEER.

The sequence is that of Putative F-box protein At1g12855 from Arabidopsis thaliana (Mouse-ear cress).